A 459-amino-acid polypeptide reads, in one-letter code: MQIQFHLYNTLTRTKELFRPQDQANVKMYVCGPTVYDNPHIGNSRSAAVYDLLYRILIKIFGSTAVKYIRNITDVDDKIIDRAELLGSTINELTDKVTQEFHINMEYLGCKLPSIEPKATEHIDIMIEIIERLIAKKHAYIADKHVYFNVLSAPNYTELSNRNLEEMFEGVRVENSKTKKHPQDFVLWKPAKPNESANMNFDSPWGLGRPGWHIECSAMSYKYLGENFDIHGGGADLIFPHHTNEIAQSRCAFPSSTYAKYWVHHGFLTVNGEKMSKSLGNFITVRDLMDKEISGEVIRLFLLSSHYRRPLDYNDKAIEDAKKTLDYWYRAIVNINLQKIDIIPNDFMQSLLDDMNTPLAVKIINDYARGVFTSTTEEEKKFNASNLITCANFIGLMNKTPHEWFNSGVNELYINELVNKRLEAKKQKNWLLADQIRNQLLEQQIVLEDKPDGTIWRKG.

Cys-31 is a Zn(2+) binding site. The short motif at 33–43 (PTVYDNPHIGN) is the 'HIGH' region element. Zn(2+)-binding residues include Cys-216, His-241, and Glu-245. Residues 274 to 278 (KMSKS) carry the 'KMSKS' region motif. Lys-277 is an ATP binding site.

It belongs to the class-I aminoacyl-tRNA synthetase family. As to quaternary structure, monomer. Requires Zn(2+) as cofactor.

It localises to the cytoplasm. It carries out the reaction tRNA(Cys) + L-cysteine + ATP = L-cysteinyl-tRNA(Cys) + AMP + diphosphate. This Rickettsia canadensis (strain McKiel) protein is Cysteine--tRNA ligase.